Reading from the N-terminus, the 381-residue chain is Protein-glutamate methylesterase/protein-glutamine glutaminase (381 aa).

One can recognise a Response regulatory domain in the interval 20–138 (RVMVVDDSVV…EIAAADIFKH (119 aa)). A 4-aspartylphosphate modification is found at Asp71. The disordered stretch occupies residues 154-176 (PAALASAREPEPRPIQATPVPAH). A CheB-type methylesterase domain is found at 183 to 373 (PFSTHAPRAL…PLQQIAPKLV (191 aa)). Active-site residues include Ser197, His225, and Asp321.

This sequence belongs to the CheB family. In terms of processing, phosphorylated by CheA. Phosphorylation of the N-terminal regulatory domain activates the methylesterase activity.

The protein resides in the cytoplasm. The catalysed reaction is [protein]-L-glutamate 5-O-methyl ester + H2O = L-glutamyl-[protein] + methanol + H(+). It catalyses the reaction L-glutaminyl-[protein] + H2O = L-glutamyl-[protein] + NH4(+). In terms of biological role, involved in chemotaxis. Part of a chemotaxis signal transduction system that modulates chemotaxis in response to various stimuli. Catalyzes the demethylation of specific methylglutamate residues introduced into the chemoreceptors (methyl-accepting chemotaxis proteins or MCP) by CheR. Also mediates the irreversible deamidation of specific glutamine residues to glutamic acid. The chain is Protein-glutamate methylesterase/protein-glutamine glutaminase from Nitrobacter hamburgensis (strain DSM 10229 / NCIMB 13809 / X14).